The following is a 1577-amino-acid chain: Disco-interacting protein 2 homolog B-A (1577 aa).

One can recognise a DMAP1-binding domain in the interval 7–124 (DLAALPKEVR…PMPTKRRSAF (118 aa)). Disordered regions lie at residues 109 to 148 (EEKM…GSLR), 173 to 204 (VQGS…QGQT), 217 to 239 (DTNS…DRNS), and 253 to 273 (SRGQ…AHSR). Over residues 124–140 (FVQSPAENCTPPDTSSA) the composition is skewed to polar residues. Over residues 176–187 (SSTSSSASSTLS) the composition is skewed to low complexity. A compositionally biased stretch (polar residues) spans 217 to 236 (DTNSSSGSVPPDVTSTAPQD).

It belongs to the DIP2 family.

It localises to the cell projection. It is found in the dendrite. The protein resides in the axon. The protein localises to the perikaryon. In terms of biological role, negatively regulates axonal outgrowth and is essential for normal synaptic transmission. Not required for regulation of axon polarity. Promotes acetylation of alpha-tubulin. The polypeptide is Disco-interacting protein 2 homolog B-A (dip2ba) (Danio rerio (Zebrafish)).